Here is a 117-residue protein sequence, read N- to C-terminus: Immunoglobulin heavy variable 7-4-1 (117 aa).

Positions 1–19 (MDWTWRILFLVAAATGAHS) are cleaved as a signal peptide. The segment at 20 to 44 (QVQLVQSGSELKKPGASVKVSCKAS) is framework-1. The region spanning 20 to 117 (QVQLVQSGSE…EDTAVYYCAR (98 aa)) is the Ig-like domain. An intrachain disulfide couples Cys-41 to Cys-115. The segment at 45–52 (GYTFTSYA) is complementarity-determining-1. The tract at residues 53–69 (MNWVRQAPGQGLEWMGW) is framework-2. The interval 70 to 77 (INTNTGNP) is complementarity-determining-2. Residues 78 to 115 (TYAQGFTGRFVFSLDTSVSTAYLQICSLKAEDTAVYYC) are framework-3. The segment at 116–117 (AR) is complementarity-determining-3.

As to quaternary structure, immunoglobulins are composed of two identical heavy chains and two identical light chains; disulfide-linked.

The protein localises to the secreted. The protein resides in the cell membrane. In terms of biological role, v region of the variable domain of immunoglobulin heavy chains that participates in the antigen recognition. Immunoglobulins, also known as antibodies, are membrane-bound or secreted glycoproteins produced by B lymphocytes. In the recognition phase of humoral immunity, the membrane-bound immunoglobulins serve as receptors which, upon binding of a specific antigen, trigger the clonal expansion and differentiation of B lymphocytes into immunoglobulins-secreting plasma cells. Secreted immunoglobulins mediate the effector phase of humoral immunity, which results in the elimination of bound antigens. The antigen binding site is formed by the variable domain of one heavy chain, together with that of its associated light chain. Thus, each immunoglobulin has two antigen binding sites with remarkable affinity for a particular antigen. The variable domains are assembled by a process called V-(D)-J rearrangement and can then be subjected to somatic hypermutations which, after exposure to antigen and selection, allow affinity maturation for a particular antigen. The sequence is that of Immunoglobulin heavy variable 7-4-1 from Homo sapiens (Human).